The primary structure comprises 349 residues: 2-oxoglutarate and iron-dependent oxygenase domain-containing protein 2 (349 aa).

Positions 211–305 (DSHRAFVVKY…RWNLILWMRA (95 aa)) constitute a Fe2OG dioxygenase domain. Residues H231, D233, and H286 each coordinate Fe cation. Residue R296 participates in 2-oxoglutarate binding.

Belongs to the OGFOD2 family. The cofactor is Fe(2+). Requires L-ascorbate as cofactor.

The polypeptide is 2-oxoglutarate and iron-dependent oxygenase domain-containing protein 2 (ogfod2) (Xenopus tropicalis (Western clawed frog)).